A 406-amino-acid polypeptide reads, in one-letter code: HEAT repeat-containing taxis protein OE_2401F (406 aa).

HEAT repeat units follow at residues 7 to 41 (LERSGDVEKLVELLQESEKETVRRRAAEILGNLDE), 42 to 78 (PEPEGIQALVDAMSDDDESVRAAAIDALTQQEAVDAL), 90 to 127 (GATWAQAEAFVENLESETPELRMAAANVLGLLGVEDTA), 153 to 184 (IEQPAVTGILVDCLHGEPLKVRREAAESLGRL), 185 to 215 (TTEQALDGLLSVVEDDSEAMRRTAVSSLGRF), 216 to 252 (ETAEPVDALVERLGDESDLVRRAAVFSLIEILSNVPP), and 370 to 406 (VGGDRSRQRLERLVDETDSEEVRRRAFSAISKLGGKT).

In terms of assembly, interacts with chemotaxis (Che) proteins.

Its function is as follows. Involved in taxis signal transduction. Essential for the ability to control the direction of flagellar rotation. May have a role between CheY and the flagellum. The sequence is that of HEAT repeat-containing taxis protein OE_2401F from Halobacterium salinarum (strain ATCC 29341 / DSM 671 / R1).